The chain runs to 172 residues: Large ribosomal subunit protein uL10 (172 aa).

It belongs to the universal ribosomal protein uL10 family. In terms of assembly, part of the ribosomal stalk of the 50S ribosomal subunit. The N-terminus interacts with L11 and the large rRNA to form the base of the stalk. The C-terminus forms an elongated spine to which L12 dimers bind in a sequential fashion forming a multimeric L10(L12)X complex.

In terms of biological role, forms part of the ribosomal stalk, playing a central role in the interaction of the ribosome with GTP-bound translation factors. The protein is Large ribosomal subunit protein uL10 of Rhodopseudomonas palustris (strain BisA53).